The sequence spans 435 residues: Xylose isomerase (435 aa).

Active-site residues include histidine 100 and aspartate 103. Mg(2+)-binding residues include glutamate 231, glutamate 267, histidine 270, aspartate 295, aspartate 306, aspartate 308, and aspartate 338.

The protein belongs to the xylose isomerase family. In terms of assembly, homotetramer. Requires Mg(2+) as cofactor.

The protein resides in the cytoplasm. The catalysed reaction is alpha-D-xylose = alpha-D-xylulofuranose. The protein is Xylose isomerase of Brucella ovis (strain ATCC 25840 / 63/290 / NCTC 10512).